Here is a 513-residue protein sequence, read N- to C-terminus: Maturase K (513 aa).

It belongs to the intron maturase 2 family. MatK subfamily.

The protein resides in the plastid. It is found in the chloroplast. Functionally, usually encoded in the trnK tRNA gene intron. Probably assists in splicing its own and other chloroplast group II introns. This Cyrilla racemiflora (Swamp titi) protein is Maturase K.